The primary structure comprises 349 residues: Isopentenyl-diphosphate delta-isomerase (349 aa).

9 to 10 (RK) contributes to the substrate binding site. Residues 65–67 (AMT), Ser-95, and Asn-124 contribute to the FMN site. Position 95–97 (95–97 (STH)) interacts with substrate. Position 154 (Gln-154) interacts with substrate. Glu-155 is a Mg(2+) binding site. FMN-binding positions include Lys-186, Ser-211, Thr-216, 262–264 (GLR), and 283–284 (SR).

It belongs to the IPP isomerase type 2 family. As to quaternary structure, homooctamer. Dimer of tetramers. FMN serves as cofactor. It depends on NADPH as a cofactor. Requires Mg(2+) as cofactor.

The protein localises to the cytoplasm. It catalyses the reaction isopentenyl diphosphate = dimethylallyl diphosphate. Involved in the biosynthesis of isoprenoids. Catalyzes the 1,3-allylic rearrangement of the homoallylic substrate isopentenyl (IPP) to its allylic isomer, dimethylallyl diphosphate (DMAPP). This Staphylococcus aureus (strain N315) protein is Isopentenyl-diphosphate delta-isomerase.